The following is a 116-amino-acid chain: MNKEIIEVFDNTFPNRDYTIEIVNPEFTSVCPKTGLPDFGTITITYVPDKSCIELKSLKYYFLEFRNAGIFYENITNTILDHLVEACQPKSMTVKTDWNARGGITETVTVSYTAEK.

Residue cysteine 31 is the Thioimide intermediate of the active site. Residue aspartate 38 is the Proton donor of the active site. Residues 53 to 55 (IEL) and 72 to 73 (YE) each bind substrate.

It belongs to the GTP cyclohydrolase I family. QueF type 1 subfamily.

It is found in the cytoplasm. The enzyme catalyses 7-aminomethyl-7-carbaguanine + 2 NADP(+) = 7-cyano-7-deazaguanine + 2 NADPH + 3 H(+). The protein operates within tRNA modification; tRNA-queuosine biosynthesis. Catalyzes the NADPH-dependent reduction of 7-cyano-7-deazaguanine (preQ0) to 7-aminomethyl-7-deazaguanine (preQ1). In Chlorobaculum parvum (strain DSM 263 / NCIMB 8327) (Chlorobium vibrioforme subsp. thiosulfatophilum), this protein is NADPH-dependent 7-cyano-7-deazaguanine reductase.